The following is a 251-amino-acid chain: Hydroxyacylglutathione hydrolase (251 aa).

7 residues coordinate Zn(2+): H53, H55, D57, H58, H110, D127, and H165.

The protein belongs to the metallo-beta-lactamase superfamily. Glyoxalase II family. As to quaternary structure, monomer. Requires Zn(2+) as cofactor.

It carries out the reaction an S-(2-hydroxyacyl)glutathione + H2O = a 2-hydroxy carboxylate + glutathione + H(+). The protein operates within secondary metabolite metabolism; methylglyoxal degradation; (R)-lactate from methylglyoxal: step 2/2. Its function is as follows. Thiolesterase that catalyzes the hydrolysis of S-D-lactoyl-glutathione to form glutathione and D-lactic acid. This Shigella boydii serotype 18 (strain CDC 3083-94 / BS512) protein is Hydroxyacylglutathione hydrolase.